Consider the following 528-residue polypeptide: MGDAPSPEEKLHLITRNLQEVLGEEKLKEILKERELKVYWGTATTGKPHVAYFVPMSKIADFLKAGCEVTILFADLHAYLDNMKAPWELLELRTSYYENVIKAMLESIGVPLEKLKFIKGTDYQLSKEYTLDVYRLSSVVTQHDAKKAGAEVVKQVEHPLLSGLLYPGLQALDEEYLKVDAQFGGVDQRKIFTFAEKYLPALGYSKRVHLMNPMVPGLTGSKMSSSEEESKIDLLDRKEDVKKKLKKAFCEPGNVENNGVLSFIKHVLFPLKSEFVILRDEKWGGNKTYTVYLELEKDFAAEVVHPGDLKNSVEVALNKLLDPIREKFNTPALKKLASAAYPDPSKQKPPAKGPAKNSEPEEVIPSRLDIRVGKILSVEKHPDADSLYVEKIDVGEAEPRTVVSGLVQFVPKEELQDRLVVVLCNLKPQKMRGVDSQGMLLCASVEGVSRQVEPLDPPAGSAPGERVFVQGYEKGQPDEELKPKKKVFEKLQADFKISEECIAQWKQTNFMTKLGFVSCKSLKGGNIS.

N-acetylmethionine is present on Met1. Gly2 is modified (N-acetylglycine; in Tyrosine--tRNA ligase, cytoplasmic, N-terminally processed). L-tyrosine is bound at residue Tyr39. Position 39 (Tyr39) interacts with trans-resveratrol. The 'HIGH' region signature appears at 44–52 (TTGKPHVAY). Tyr166, Gln170, Asp173, and Gln188 together coordinate L-tyrosine. Positions 170 and 173 each coordinate trans-resveratrol. Residue Lys197 is modified to N6-acetyllysine. Residue Ser205 is modified to Phosphoserine. Lys206 is modified (N6-acetyllysine). The short motif at 222 to 226 (KMSSS) is the 'KMSKS' region element. The Nuclear localization signal signature appears at 242 to 247 (KKKLKK). The interval 339-363 (AAYPDPSKQKPPAKGPAKNSEPEEV) is disordered. A tRNA-binding domain is found at 364–468 (IPSRLDIRVG…AGSAPGERVF (105 aa)). Ser386 is modified (phosphoserine). An N6-acetyllysine mark is found at Lys474, Lys482, and Lys490.

This sequence belongs to the class-I aminoacyl-tRNA synthetase family. Homodimer. Interacts (when binding to resveratrol) with PARP1; interaction stimulates the poly-ADP-ribosyltransferase activity of PARP1.

Its subcellular location is the cytoplasm. The protein localises to the nucleus. The catalysed reaction is tRNA(Tyr) + L-tyrosine + ATP = L-tyrosyl-tRNA(Tyr) + AMP + diphosphate + H(+). With respect to regulation, resveratrol strongly inhibits the tyrosine--tRNA ligase activity. Tyrosine--tRNA ligase that catalyzes the attachment of tyrosine to tRNA(Tyr) in a two-step reaction: tyrosine is first activated by ATP to form Tyr-AMP and then transferred to the acceptor end of tRNA(Tyr). Also acts as a positive regulator of poly-ADP-ribosylation in the nucleus, independently of its tyrosine--tRNA ligase activity. Activity is switched upon resveratrol-binding: resveratrol strongly inhibits the tyrosine--tRNA ligase activity and promotes relocalization to the nucleus, where YARS1 specifically stimulates the poly-ADP-ribosyltransferase activity of PARP1. The polypeptide is Tyrosine--tRNA ligase, cytoplasmic (Yars1) (Mus musculus (Mouse)).